A 341-amino-acid chain; its full sequence is uncharacterized protein (341 aa).

The segment covering 1 to 12 (NSRIAHVPKSKK) has biased composition (basic residues). Disordered stretches follow at residues 1 to 21 (NSRI…SPRF) and 291 to 317 (KARM…NPED). Residues 297-312 (SGKNYQQRPSRTTSPA) are compositionally biased toward polar residues.

This is an uncharacterized protein from Lachancea kluyveri (strain ATCC 58438 / CBS 3082 / BCRC 21498 / NBRC 1685 / JCM 7257 / NCYC 543 / NRRL Y-12651) (Yeast).